The following is a 432-amino-acid chain: Enolase (432 aa).

Glutamine 164 contributes to the (2R)-2-phosphoglycerate binding site. The active-site Proton donor is the glutamate 206. Mg(2+)-binding residues include aspartate 243, glutamate 289, and aspartate 316. (2R)-2-phosphoglycerate is bound by residues lysine 341, arginine 370, serine 371, and lysine 392. The active-site Proton acceptor is lysine 341.

The protein belongs to the enolase family. Mg(2+) serves as cofactor.

It localises to the cytoplasm. The protein resides in the secreted. Its subcellular location is the cell surface. The enzyme catalyses (2R)-2-phosphoglycerate = phosphoenolpyruvate + H2O. It participates in carbohydrate degradation; glycolysis; pyruvate from D-glyceraldehyde 3-phosphate: step 4/5. Its function is as follows. Catalyzes the reversible conversion of 2-phosphoglycerate (2-PG) into phosphoenolpyruvate (PEP). It is essential for the degradation of carbohydrates via glycolysis. This chain is Enolase, found in Borrelia duttonii (strain Ly).